Here is a 285-residue protein sequence, read N- to C-terminus: HTH-type transcriptional regulator MurR (285 aa).

Residues M1 to S77 enclose the HTH rpiR-type domain. A DNA-binding region (H-T-H motif) is located at residues S37–Q56. Positions I128–E279 constitute an SIS domain.

In terms of assembly, homotetramer.

It functions in the pathway amino-sugar metabolism; N-acetylmuramate degradation [regulation]. Functionally, represses the expression of the murPQ operon involved in the uptake and degradation of N-acetylmuramic acid (MurNAc). Binds to two adjacent inverted repeats within the operator region. MurNAc 6-phosphate, the substrate of MurQ, is the specific inducer that weakens binding of MurR to the operator. The polypeptide is HTH-type transcriptional regulator MurR (Shigella boydii serotype 4 (strain Sb227)).